A 221-amino-acid chain; its full sequence is Growth hormone-releasing peptides (221 aa).

Residues 1–25 form the signal peptide; the sequence is MHLKIGTLTIRTIMLFTLCTFLTLF. Positions 26-95 are excised as a propeptide; that stretch reads AFSTCFDETK…QPENEFLQER (70 aa). A Phenylalanine amide modification is found at Phe107. Positions 110–127 are excised as a propeptide; sequence TSDDKIAKSIPSFDKIAK. 3 positions are modified to phenylalanine amide: Phe136, Phe156, and Phe176. A propeptide spanning residues 179–221 is cleaved from the precursor; it reads TPHSDRLQYEMNSHPLELKNPEEDSDRKKRQAMTFRIRTDLQM.

The protein belongs to the FARP (FMRFamide related peptide) family. As to expression, observed in the suprachiasmatic nucleus and in several telencephalic and diencephalic regions.

The protein resides in the secreted. Functionally, primary role is to release GH from the pituitary. May act as an endogenous ligand in the bullfrog hypothalamo-hypophysial system. The sequence is that of Growth hormone-releasing peptides from Aquarana catesbeiana (American bullfrog).